Here is a 35-residue protein sequence, read N- to C-terminus: MIRVVHYIKEFFANIGGEEMAHVAPEVREGVVGPG.

This sequence belongs to the GrdB/GrdF/GrdH family. Heterohexamer of two alpha, two beta and two gamma subunits. Component of the glycine reductase complex, together with components A and C. PB is substrate specific.

The enzyme catalyses acetyl phosphate + [thioredoxin]-disulfide + NH4(+) + H2O = [thioredoxin]-dithiol + glycine + phosphate + H(+). In terms of biological role, in the first step of glycine reductase, the substrate is bound to component PB via a Schiff base intermediate. Then the PB-activated substrate is nucleophilically attacked by the selenol anion of component PA to transform it to a carboxymethylated selenoether and the respective amine. By action of component PC, acetyl phosphate is formed, leaving component PA in its oxidized state. Finally component PA becomes reduced by the thioredoxin system to start a new catalytic cycle of reductive deamination. This chain is Glycine reductase complex component B subunit gamma (grdB), found in Gottschalkia purinilytica (Clostridium purinilyticum).